We begin with the raw amino-acid sequence, 57 residues long: Large ribosomal subunit protein bL32 (57 aa).

The protein belongs to the bacterial ribosomal protein bL32 family.

The polypeptide is Large ribosomal subunit protein bL32 (Staphylococcus haemolyticus (strain JCSC1435)).